Here is a 242-residue protein sequence, read N- to C-terminus: Sugar fermentation stimulation protein homolog (242 aa).

The protein belongs to the SfsA family.

This chain is Sugar fermentation stimulation protein homolog, found in Nitratidesulfovibrio vulgaris (strain DP4) (Desulfovibrio vulgaris).